The chain runs to 1116 residues: Eukaryotic translation initiation factor 2-alpha kinase 3 (1116 aa).

The signal sequence occupies residues 1–29 (MERAISPGLLVRALLLLLLLLGLAARTVA). The Lumenal segment spans residues 30–514 (AGRARGLPAP…HYNKNIRKKD (485 aa)). Positions 77-101 (ALPAAAGEQEPRGPEPDDETELRPR) are disordered. N-linked (GlcNAc...) asparagine glycosylation is present at N258. A helical transmembrane segment spans residues 515-535 (PVLLLHWWKEIVATILFCIIA). Residues 536–1116 (TTFIVRRLFH…NNSHSPLPSN (581 aa)) are Cytoplasmic-facing. A disordered region spans residues 550-571 (RQRKESETQCQTENKYDSVSGE). A Protein kinase domain is found at 593–1077 (FEPIQCLGRG…AINIIENAVF (485 aa)). Residue 599 to 607 (LGRGGFGVV) coordinates ATP. Residue Y619 is modified to Phosphotyrosine; by autocatalysis. K622 serves as a coordination point for ATP. The insert loop stretch occupies residues 647–888 (EHPGIVRYFN…SPKVYLYIQM (242 aa)). S715 carries the post-translational modification Phosphoserine. T802 is modified (phosphothreonine). Residues 841-863 (KPTSSKSSSEATLSISPPRPTTL) are disordered. Residues 844–856 (SSKSSSEATLSIS) show a composition bias toward low complexity. D937 (proton acceptor) is an active-site residue. Position 982 is a phosphothreonine (T982). The tract at residues 1090–1116 (QRSRSLSSSGTKHSRQSNNSHSPLPSN) is disordered. The residue at position 1094 (S1094) is a Phosphoserine. The segment covering 1105–1116 (QSNNSHSPLPSN) has biased composition (polar residues).

The protein belongs to the protein kinase superfamily. Ser/Thr protein kinase family. GCN2 subfamily. As to quaternary structure, forms dimers with HSPA5/BIP in resting cells. Homotetramerizes in response to endoplasmic reticulum (ER) stress, leading to its activation. Interacts with HSP90B1/GRP94. Interacts with DNAJC3; inhibiting EIF2AK3/PERK activity. Interacts with ATAD3A; ATAD3A and EIF2S1/eIF-2-alpha occupy a common binding site within the cytoplasmic loop of EIF2AK3/PERK, leading to prevent EIF2AK3/PERK association with its substrate EIF2S1/eIF-2-alpha. Interacts with MFN2. Interacts with TMEM33. Interacts with PDIA6. Interacts with LACC1. Post-translationally, oligomerization of the N-terminal ER luminal domain by ER stress promotes EIF2AK3/PERK trans-autophosphorylation of the C-terminal cytoplasmic kinase domain at multiple residues including Thr-982 on the kinase activation loop. Autophosphorylated at Tyr-619 following endoplasmic reticulum stress, leading to activate its activity. Dephosphorylated at Tyr-619 by PTPN1/PTP1B, leading to inactivate its enzyme activity. Phosphorylation at Thr-802 by AKT (AKT1, AKT2 and/or AKT3) inactivates EIF2AK3/PERK. ADP-ribosylated by PARP16 upon ER stress, which increases kinase activity. In terms of tissue distribution, ubiquitous. A high level expression is seen in secretory tissues.

It is found in the endoplasmic reticulum membrane. The enzyme catalyses L-seryl-[protein] + ATP = O-phospho-L-seryl-[protein] + ADP + H(+). It carries out the reaction L-threonyl-[protein] + ATP = O-phospho-L-threonyl-[protein] + ADP + H(+). The catalysed reaction is L-tyrosyl-[protein] + ATP = O-phospho-L-tyrosyl-[protein] + ADP + H(+). Its activity is regulated as follows. Inhibited by HSPA5/BIP in absence of stress. Perturbation in protein folding in the endoplasmic reticulum (ER) promotes reversible dissociation from HSPA5/BIP and oligomerization, resulting in trans-autophosphorylation and kinase activity induction. Inactivated following phosphorylation at Thr-802 by AKT (AKT1, AKT2 and/or AKT3). Inhibited by ATAD3A at mitochondria-endoplasmic reticulum contact sites, providing a safe haven for mitochondrial protein translation during ER stress. Metabolic-stress sensing protein kinase that phosphorylates the alpha subunit of eukaryotic translation initiation factor 2 (EIF2S1/eIF-2-alpha) in response to various stress, such as unfolded protein response (UPR). Key effector of the integrated stress response (ISR) to unfolded proteins: EIF2AK3/PERK specifically recognizes and binds misfolded proteins, leading to its activation and EIF2S1/eIF-2-alpha phosphorylation. EIF2S1/eIF-2-alpha phosphorylation in response to stress converts EIF2S1/eIF-2-alpha in a global protein synthesis inhibitor, leading to a global attenuation of cap-dependent translation, while concomitantly initiating the preferential translation of ISR-specific mRNAs, such as the transcriptional activators ATF4 and QRICH1, and hence allowing ATF4- and QRICH1-mediated reprogramming. The EIF2AK3/PERK-mediated unfolded protein response increases mitochondrial oxidative phosphorylation by promoting ATF4-mediated expression of COX7A2L/SCAF1, thereby increasing formation of respiratory chain supercomplexes. In contrast to most subcellular compartments, mitochondria are protected from the EIF2AK3/PERK-mediated unfolded protein response due to EIF2AK3/PERK inhibition by ATAD3A at mitochondria-endoplasmic reticulum contact sites. In addition to EIF2S1/eIF-2-alpha, also phosphorylates NFE2L2/NRF2 in response to stress, promoting release of NFE2L2/NRF2 from the BCR(KEAP1) complex, leading to nuclear accumulation and activation of NFE2L2/NRF2. Serves as a critical effector of unfolded protein response (UPR)-induced G1 growth arrest due to the loss of cyclin-D1 (CCND1). Involved in control of mitochondrial morphology and function. In Homo sapiens (Human), this protein is Eukaryotic translation initiation factor 2-alpha kinase 3.